The primary structure comprises 347 residues: UPF0324 membrane protein Atu0671 (347 aa).

The next 10 membrane-spanning stretches (helical) occupy residues 15–37, 50–72, 105–127, 140–162, 172–194, 201–223, 233–250, 263–282, 287–309, and 322–344; these read LRWL…AAIL, WLGD…SLPV, AGGL…SYAA, LIAC…AIGA, AFTA…LLGL, IFAG…LGAV, LIRV…SVIH, MVPW…SFGL, LLSP…LGLS, and VIIA…ILLT.

It belongs to the UPF0324 family.

It localises to the cell membrane. The polypeptide is UPF0324 membrane protein Atu0671 (Agrobacterium fabrum (strain C58 / ATCC 33970) (Agrobacterium tumefaciens (strain C58))).